The primary structure comprises 348 residues: WW domain binding protein 1-like (348 aa).

Residues 42–62 form a helical membrane-spanning segment; it reads LWWFWLVWTVVIILSCCCVCH. 2 disordered regions span residues 111–253 and 306–348; these read VVNR…RRFT and CLSS…GSPS. Residues 134-155 are compositionally biased toward pro residues; that stretch reads LPPPPQGGPPGGSPPGADPPPQ. The segment covering 156 to 177 has biased composition (low complexity); it reads GSQGAQSSPLSGPSRSSTRPPS. Position 177 is a phosphoserine (S177). The segment covering 220 to 234 has biased composition (basic and acidic residues); it reads SECKEELLKDSRSER. Polar residues predominate over residues 331–348; it reads NTINEQDSPNSQHSGSPS.

The protein localises to the membrane. This is WW domain binding protein 1-like (Wbp1l) from Mus musculus (Mouse).